A 54-amino-acid polypeptide reads, in one-letter code: Large ribosomal subunit protein bL32 (54 aa).

The tract at residues 1 to 26 (MAVQKNKPTRSKRGMRRSHDSLTAPH) is disordered. Positions 7–16 (KPTRSKRGMR) are enriched in basic residues.

It belongs to the bacterial ribosomal protein bL32 family.

The sequence is that of Large ribosomal subunit protein bL32 from Buchnera aphidicola subsp. Acyrthosiphon pisum (strain 5A).